The primary structure comprises 1238 residues: Chitin synthase 4 (1238 aa).

2 disordered regions span residues 1 to 93 (MAEP…PERN) and 132 to 190 (TVSS…RRQK). Residues 14–34 (TRDKSHSPYRESPSRRLRDVE) are compositionally biased toward basic and acidic residues. Residue N50 is glycosylated (N-linked (GlcNAc...) asparagine). Polar residues-rich tracts occupy residues 71–80 (SNPNPMSQSD) and 133–142 (VSSGSTQQDT). The segment covering 175–190 (RKDTRNLTEEEKRRQK) has biased composition (basic and acidic residues). N180 carries an N-linked (GlcNAc...) asparagine glycan. Helical transmembrane passes span 200-220 (IWNI…LQCF) and 235-255 (VGLI…TFGF). 3 N-linked (GlcNAc...) asparagine glycosylation sites follow: N365, N404, and N426. A helical membrane pass occupies residues 487–507 (VVLYVSLVFILAIVAAKFFLA). 2 disordered regions span residues 548–570 (PKIT…RGSM) and 582–606 (YAVD…AKLL). The span at 553–562 (PASTVTGSDG) shows a compositional bias: polar residues. 3 N-linked (GlcNAc...) asparagine glycosylation sites follow: N617, N903, and N1030. The next 3 helical transmembrane spans lie at 1062 to 1082 (IGTL…ILSI), 1087 to 1107 (VPVI…ILIV), and 1115 to 1135 (YILW…VLPA).

The protein belongs to the chitin synthase family. Class IV subfamily. Maximal activity requires trypsin activation, suggesting a zymogenic nature.

Its subcellular location is the cell membrane. It carries out the reaction [(1-&gt;4)-N-acetyl-beta-D-glucosaminyl](n) + UDP-N-acetyl-alpha-D-glucosamine = [(1-&gt;4)-N-acetyl-beta-D-glucosaminyl](n+1) + UDP + H(+). With respect to regulation, activity is stimulated by Mg(2+), and is more inhibited by polyoxin D than by nikkomycin. Functionally, polymerizes chitin, a structural polymer of the cell wall and septum, by transferring the sugar moiety of UDP-GlcNAc to the non-reducing end of the growing chitin polymer. CHS4 synthesizes a large amount of chitin and appears to play a role in the process of cell separation. CHS4 is particularly well suited for functioning at the higher temperatures associated with its poorly characterized saprophic environment and with human infection. This Exophiala dermatitidis (Black yeast-like fungus) protein is Chitin synthase 4.